The primary structure comprises 341 residues: L-threonine 3-dehydrogenase (341 aa).

Residue Cys-38 coordinates Zn(2+). Active-site charge relay system residues include Thr-40 and His-43. Zn(2+)-binding residues include His-63, Glu-64, Cys-93, Cys-96, Cys-99, and Cys-107. Residues Ile-175, Asp-195, Arg-200, Leu-262–Ile-264, and Ile-286–Tyr-287 each bind NAD(+).

It belongs to the zinc-containing alcohol dehydrogenase family. As to quaternary structure, homotetramer. It depends on Zn(2+) as a cofactor.

It is found in the cytoplasm. The enzyme catalyses L-threonine + NAD(+) = (2S)-2-amino-3-oxobutanoate + NADH + H(+). It functions in the pathway amino-acid degradation; L-threonine degradation via oxydo-reductase pathway; glycine from L-threonine: step 1/2. Catalyzes the NAD(+)-dependent oxidation of L-threonine to 2-amino-3-ketobutyrate. In Salmonella choleraesuis (strain SC-B67), this protein is L-threonine 3-dehydrogenase.